The following is a 57-amino-acid chain: Protein translocase subunit SecE (57 aa).

Residues 34–54 form a helical membrane-spanning segment; it reads AGILLIGAIGFLVFLIMGGIV.

The protein belongs to the SecE/SEC61-gamma family. As to quaternary structure, component of the Sec protein translocase complex. Heterotrimer consisting of SecY (alpha), SecG (beta) and SecE (gamma) subunits. The heterotrimers can form oligomers, although 1 heterotrimer is thought to be able to translocate proteins. Interacts with the ribosome. May interact with SecDF, and other proteins may be involved.

Its subcellular location is the cell membrane. In terms of biological role, essential subunit of the Sec protein translocation channel SecYEG. Clamps together the 2 halves of SecY. May contact the channel plug during translocation. The polypeptide is Protein translocase subunit SecE (Halobacterium salinarum (strain ATCC 29341 / DSM 671 / R1)).